Here is a 147-residue protein sequence, read N- to C-terminus: Gastrula-specific protein 17 (147 aa).

The segment at 1–119 (MSQNLDFLAL…TQVYGNHQPG (119 aa)) is disordered. 3 stretches are compositionally biased toward polar residues: residues 20–36 (SPTS…STPP), 45–57 (RQIS…YTNP), and 74–88 (LLQN…SPTA).

The chain is Gastrula-specific protein 17 (gs17) from Xenopus laevis (African clawed frog).